The primary structure comprises 177 residues: Large ribosomal subunit protein uL6 (177 aa).

The protein belongs to the universal ribosomal protein uL6 family. In terms of assembly, part of the 50S ribosomal subunit.

In terms of biological role, this protein binds to the 23S rRNA, and is important in its secondary structure. It is located near the subunit interface in the base of the L7/L12 stalk, and near the tRNA binding site of the peptidyltransferase center. The protein is Large ribosomal subunit protein uL6 of Polaromonas naphthalenivorans (strain CJ2).